The chain runs to 149 residues: Large ribosomal subunit protein bL9 (149 aa).

Belongs to the bacterial ribosomal protein bL9 family.

Its function is as follows. Binds to the 23S rRNA. This Glaesserella parasuis serovar 5 (strain SH0165) (Haemophilus parasuis) protein is Large ribosomal subunit protein bL9.